The following is a 116-amino-acid chain: Large ribosomal subunit protein bL19 (116 aa).

This sequence belongs to the bacterial ribosomal protein bL19 family.

This protein is located at the 30S-50S ribosomal subunit interface and may play a role in the structure and function of the aminoacyl-tRNA binding site. The polypeptide is Large ribosomal subunit protein bL19 (Pseudomonas putida (strain ATCC 700007 / DSM 6899 / JCM 31910 / BCRC 17059 / LMG 24140 / F1)).